The primary structure comprises 309 residues: tRNA dimethylallyltransferase (309 aa).

Residue 13–20 coordinates ATP; that stretch reads GPTAVGKS. 15-20 is a substrate binding site; the sequence is TAVGKS.

The protein belongs to the IPP transferase family. Monomer. Requires Mg(2+) as cofactor.

It carries out the reaction adenosine(37) in tRNA + dimethylallyl diphosphate = N(6)-dimethylallyladenosine(37) in tRNA + diphosphate. Its function is as follows. Catalyzes the transfer of a dimethylallyl group onto the adenine at position 37 in tRNAs that read codons beginning with uridine, leading to the formation of N6-(dimethylallyl)adenosine (i(6)A). The chain is tRNA dimethylallyltransferase from Lacticaseibacillus paracasei (strain ATCC 334 / BCRC 17002 / CCUG 31169 / CIP 107868 / KCTC 3260 / NRRL B-441) (Lactobacillus paracasei).